The chain runs to 571 residues: Proline--tRNA ligase (571 aa).

Belongs to the class-II aminoacyl-tRNA synthetase family. ProS type 1 subfamily. Homodimer.

The protein resides in the cytoplasm. The catalysed reaction is tRNA(Pro) + L-proline + ATP = L-prolyl-tRNA(Pro) + AMP + diphosphate. Catalyzes the attachment of proline to tRNA(Pro) in a two-step reaction: proline is first activated by ATP to form Pro-AMP and then transferred to the acceptor end of tRNA(Pro). As ProRS can inadvertently accommodate and process non-cognate amino acids such as alanine and cysteine, to avoid such errors it has two additional distinct editing activities against alanine. One activity is designated as 'pretransfer' editing and involves the tRNA(Pro)-independent hydrolysis of activated Ala-AMP. The other activity is designated 'posttransfer' editing and involves deacylation of mischarged Ala-tRNA(Pro). The misacylated Cys-tRNA(Pro) is not edited by ProRS. The polypeptide is Proline--tRNA ligase (Proteus mirabilis (strain HI4320)).